The primary structure comprises 210 residues: N-(5'-phosphoribosyl)anthranilate isomerase (210 aa).

The protein belongs to the TrpF family.

The catalysed reaction is N-(5-phospho-beta-D-ribosyl)anthranilate = 1-(2-carboxyphenylamino)-1-deoxy-D-ribulose 5-phosphate. It participates in amino-acid biosynthesis; L-tryptophan biosynthesis; L-tryptophan from chorismate: step 3/5. The polypeptide is N-(5'-phosphoribosyl)anthranilate isomerase (Pseudomonas fluorescens (strain ATCC BAA-477 / NRRL B-23932 / Pf-5)).